The chain runs to 354 residues: UDP-N-acetylglucosamine--N-acetylmuramyl-(pentapeptide) pyrophosphoryl-undecaprenol N-acetylglucosamine transferase (354 aa).

UDP-N-acetyl-alpha-D-glucosamine contacts are provided by residues 11-13 (SAG), Arg164, Ser194, and Gln289.

It belongs to the glycosyltransferase 28 family. MurG subfamily.

The protein resides in the cell membrane. The catalysed reaction is di-trans,octa-cis-undecaprenyl diphospho-N-acetyl-alpha-D-muramoyl-L-alanyl-D-glutamyl-meso-2,6-diaminopimeloyl-D-alanyl-D-alanine + UDP-N-acetyl-alpha-D-glucosamine = di-trans,octa-cis-undecaprenyl diphospho-[N-acetyl-alpha-D-glucosaminyl-(1-&gt;4)]-N-acetyl-alpha-D-muramoyl-L-alanyl-D-glutamyl-meso-2,6-diaminopimeloyl-D-alanyl-D-alanine + UDP + H(+). It participates in cell wall biogenesis; peptidoglycan biosynthesis. Cell wall formation. Catalyzes the transfer of a GlcNAc subunit on undecaprenyl-pyrophosphoryl-MurNAc-pentapeptide (lipid intermediate I) to form undecaprenyl-pyrophosphoryl-MurNAc-(pentapeptide)GlcNAc (lipid intermediate II). The protein is UDP-N-acetylglucosamine--N-acetylmuramyl-(pentapeptide) pyrophosphoryl-undecaprenol N-acetylglucosamine transferase of Shouchella clausii (strain KSM-K16) (Alkalihalobacillus clausii).